Consider the following 831-residue polypeptide: MYKLPQRNCADKQEYTVHMRKMGMVIFACLLLLIIFPTFGYADINTSSPLSIGQTLSSPDGVYELGFFSPNNSRKQYVGIWFKNIAPQVVVWVANRDKPVTKTAANLTISSNGSLILLDGTQDVIWSTGEAFTSNKCHAELLDTGNLVVIDDVSGKTLWKSFENLGNTMLPQSSVMYDIPRGKNRVLTSWRSNSDPSPGEFTLEFTPQVPPQGLIRRGSSPYWRSGPWAKTRFSGIPGIDASYVSPFTVLQDVAKGTASFSYSMLRNYKLSYVTLTSEGKMKILWNDGKSWKLHFEAPTSSCDLYRACGPFGLCVRSRNPKCICLKGFVPKSDDEWKKGNWTSGCVRRTQLSCHTNSSTKTQGKETDSFYHMTRVKTPDLYQLAGFLNAEQCYQDCLGNCSCTAFAYISGIGCLVWNRELVDTVQFLSDGESLSLRLASSELAGSNRTKIILGTTVSLSIFVILVFAAYKSWRYRTKQNEPNPMFIHSSQDAWAKDMEPQDVSGVNLFDMHTIRTATNNFSSSNKLGQGGFGPVYKGKLVDGKEIAVKRLSSSSGQGTDEFMNEIRLISKLQHKNLVRLLGCCIKGEEKLLIYEYLVNKSLDVFLFDSTLKFEIDWQKRFNIIQGVARGLLYLHRDSRLRVIHRDLKVSNILLDEKMIPKISDFGLARMSQGTQYQDNTRRVVGTLGYMAPEYAWTGVFSEKSDIYSFGVLLLEIIIGEKISRFSEEGKTLLAYAWESWCETKGVDLLDQALADSSHPAEVGRCVQIGLLCVQHQPADRPNTLELMSMLTTISELPSPKQPTFTVHSRDDDSTSNDLITVNEITQSVIQGR.

Positions methionine 1 to alanine 42 are cleaved as a signal peptide. A Bulb-type lectin domain is found at aspartate 43 to phenylalanine 162. Residues aspartate 43–threonine 448 are Extracellular-facing. N-linked (GlcNAc...) asparagine glycans are attached at residues asparagine 45, asparagine 71, asparagine 106, and asparagine 112. The region spanning proline 298–aspartate 334 is the EGF-like; atypical domain. 2 disulfides stabilise this stretch: cysteine 302/cysteine 314 and cysteine 308/cysteine 322. Residues asparagine 340, asparagine 356, asparagine 399, and asparagine 446 are each glycosylated (N-linked (GlcNAc...) asparagine). The PAN domain maps to cysteine 353–serine 439. 2 cysteine pairs are disulfide-bonded: cysteine 392/cysteine 413 and cysteine 396/cysteine 402. The helical transmembrane segment at lysine 449 to tyrosine 469 threads the bilayer. At lysine 470 to arginine 831 the chain is on the cytoplasmic side. In terms of domain architecture, Protein kinase spans phenylalanine 520–phenylalanine 803. ATP is bound by residues leucine 526–valine 534 and lysine 548. Phosphoserine occurs at positions 554 and 569. Positions threonine 609–valine 626 are caM-binding. Aspartate 645 acts as the Proton acceptor in catalysis. A phosphoserine mark is found at serine 649 and serine 662. Phosphothreonine is present on threonine 679. Residues serine 722 and serine 814 each carry the phosphoserine modification.

Belongs to the protein kinase superfamily. Ser/Thr protein kinase family.

The protein localises to the cell membrane. The enzyme catalyses L-seryl-[protein] + ATP = O-phospho-L-seryl-[protein] + ADP + H(+). It carries out the reaction L-threonyl-[protein] + ATP = O-phospho-L-threonyl-[protein] + ADP + H(+). This Arabidopsis thaliana (Mouse-ear cress) protein is G-type lectin S-receptor-like serine/threonine-protein kinase At1g61390.